A 115-amino-acid polypeptide reads, in one-letter code: UPF0122 protein NT01CX_2214 (115 aa).

The protein belongs to the UPF0122 family.

Functionally, might take part in the signal recognition particle (SRP) pathway. This is inferred from the conservation of its genetic proximity to ftsY/ffh. May be a regulatory protein. This is UPF0122 protein NT01CX_2214 from Clostridium novyi (strain NT).